The primary structure comprises 87 residues: Toxin RelG (87 aa).

This sequence belongs to the RelE toxin family. In terms of assembly, interacts with cognate antitoxin RelF, which neutralizes the toxin. Also interacts with non-cognate antitoxin RelB in vitro, in M.smegmatis this neutralizes the toxicity of this toxin.

In terms of biological role, toxic component of a type II toxin-antitoxin (TA) system. Has RNase activity and preferentially cleaves at the 3'-end of purine ribonucleotides. Overexpression in M.tuberculosis or M.smegmatis inhibits colony formation in a bacteriostatic rather than bacteriocidal fashion. Its toxic effect is neutralized by coexpression with cognate antitoxin RelB2 (shown only for M.smegmatis). Overexpression also increases the number of gentamicin-tolerant and levofloxacin-tolerant persister cells. In combination with cognate antitoxin RelF represses its own promoter. Has been seen to bind DNA in complex with antitoxin RelF but not alone. The sequence is that of Toxin RelG (relG) from Mycobacterium tuberculosis (strain ATCC 25618 / H37Rv).